A 27-amino-acid polypeptide reads, in one-letter code: DELTA-pseudomyrmecitoxin-Pp1a subunit A (27 aa).

As to quaternary structure, heterodimer composed of subunit A and subunit B (DELTA-PSDTX-Pp1a); disulfide-linked. In terms of tissue distribution, expressed by the venom gland.

The protein localises to the secreted. This heterodimer has insecticidal and cytotoxic properties. Induces immediate paralysis when injected into blowflies (Lucilia cuprina), and then death within 24 hours. Also inhibits the growth of Aedes albopictus mosquito C6/36 cells. This is DELTA-pseudomyrmecitoxin-Pp1a subunit A from Pseudomyrmex penetrator (Ant).